An 860-amino-acid chain; its full sequence is Leucine--tRNA ligase (860 aa).

The 'HIGH' region signature appears at Pro42–His52. The 'KMSKS' region signature appears at Lys619 to Ser623. Residue Lys622 coordinates ATP.

It belongs to the class-I aminoacyl-tRNA synthetase family.

It is found in the cytoplasm. The catalysed reaction is tRNA(Leu) + L-leucine + ATP = L-leucyl-tRNA(Leu) + AMP + diphosphate. The polypeptide is Leucine--tRNA ligase (Salmonella agona (strain SL483)).